A 124-amino-acid polypeptide reads, in one-letter code: MHSSKRVMTTKTHVEQPESSMRPQLPESIQGSLMDVGMRVRKSISTGYKSKQTTFPAYNPPLYNTVSENIALKNTAFSYEPNGTKRPFEQAIPNYNWANPPQDFEEPEWLKPFDVVMEGTNERL.

Residues 1–31 (MHSSKRVMTTKTHVEQPESSMRPQLPESIQG) are compositionally biased toward polar residues. The disordered stretch occupies residues 1-32 (MHSSKRVMTTKTHVEQPESSMRPQLPESIQGS).

This sequence belongs to the DIF1/spd1 family. Interacts with cdc22. In terms of processing, ubiquitinated by the DCX(DTL) complex, also named CRL4(CDT2) complex, leading to its degradation.

The protein resides in the cytoplasm. The protein localises to the nucleus. In terms of biological role, regulates the ribonucleotide reductase activity through its mediation of the nuclear localization of suc22, the small subunit of the ribonucleotide reductase. Delays the progression of the G1-S phase transition, thereby ensuring the G1 phase is complete. Interacts with both p34 and the p34-p56 complex, although no direct inhibitory effect on the bound proteins has been demonstrated. The action of p14 may happen coincidentally with the cdc10 function or may happen downstream of this. The chain is S-phase delaying protein 1 (spd1) from Schizosaccharomyces pombe (strain 972 / ATCC 24843) (Fission yeast).